Reading from the N-terminus, the 142-residue chain is Small ribosomal subunit protein bS6 (142 aa).

Residues 110-133 (NKKPSHAKEKHEKTEHTHSHHTEE) are compositionally biased toward basic and acidic residues. The disordered stretch occupies residues 110-142 (NKKPSHAKEKHEKTEHTHSHHTEETESVGSHSK).

Belongs to the bacterial ribosomal protein bS6 family.

Its function is as follows. Binds together with bS18 to 16S ribosomal RNA. In Helicobacter pylori (strain Shi470), this protein is Small ribosomal subunit protein bS6.